Here is a 329-residue protein sequence, read N- to C-terminus: Lipoyl synthase (329 aa).

Cys72, Cys77, Cys83, Cys98, Cys102, Cys105, and Ser313 together coordinate [4Fe-4S] cluster. The 221-residue stretch at 83–303 folds into the Radical SAM core domain; that stretch reads CWSHGTATIM…QIGLKKGFFE (221 aa).

It belongs to the radical SAM superfamily. Lipoyl synthase family. [4Fe-4S] cluster serves as cofactor.

The protein resides in the cytoplasm. The catalysed reaction is [[Fe-S] cluster scaffold protein carrying a second [4Fe-4S](2+) cluster] + N(6)-octanoyl-L-lysyl-[protein] + 2 oxidized [2Fe-2S]-[ferredoxin] + 2 S-adenosyl-L-methionine + 4 H(+) = [[Fe-S] cluster scaffold protein] + N(6)-[(R)-dihydrolipoyl]-L-lysyl-[protein] + 4 Fe(3+) + 2 hydrogen sulfide + 2 5'-deoxyadenosine + 2 L-methionine + 2 reduced [2Fe-2S]-[ferredoxin]. The protein operates within protein modification; protein lipoylation via endogenous pathway; protein N(6)-(lipoyl)lysine from octanoyl-[acyl-carrier-protein]: step 2/2. Its function is as follows. Catalyzes the radical-mediated insertion of two sulfur atoms into the C-6 and C-8 positions of the octanoyl moiety bound to the lipoyl domains of lipoate-dependent enzymes, thereby converting the octanoylated domains into lipoylated derivatives. The sequence is that of Lipoyl synthase from Legionella pneumophila (strain Paris).